A 72-amino-acid polypeptide reads, in one-letter code: uncharacterized protein (72 aa).

This is an uncharacterized protein from Dictyostelium discoideum (Social amoeba).